The primary structure comprises 84 residues: MAHKKAGGSTRNGRDSNPKYLGVKRYGGELVKAGTIIIRQRGTKTHPGVNVGCGKDHTLFALKDGTVKFHTGGALNRKFVSIEE.

The tract at residues 1 to 21 is disordered; it reads MAHKKAGGSTRNGRDSNPKYL.

It belongs to the bacterial ribosomal protein bL27 family.

The protein is Large ribosomal subunit protein bL27 of Francisella tularensis subsp. holarctica (strain FTNF002-00 / FTA).